A 264-amino-acid chain; its full sequence is S-adenosylmethionine decarboxylase proenzyme (264 aa).

Ser-113 serves as the catalytic Schiff-base intermediate with substrate; via pyruvic acid. At Ser-113 the chain carries Pyruvic acid (Ser); by autocatalysis. The active-site Proton acceptor; for processing activity is His-118. Cys-141 acts as the Proton donor; for catalytic activity in catalysis.

It belongs to the prokaryotic AdoMetDC family. Type 2 subfamily. As to quaternary structure, heterooctamer of four alpha and four beta chains arranged as a tetramer of alpha/beta heterodimers. Pyruvate is required as a cofactor. Is synthesized initially as an inactive proenzyme. Formation of the active enzyme involves a self-maturation process in which the active site pyruvoyl group is generated from an internal serine residue via an autocatalytic post-translational modification. Two non-identical subunits are generated from the proenzyme in this reaction, and the pyruvate is formed at the N-terminus of the alpha chain, which is derived from the carboxyl end of the proenzyme. The post-translation cleavage follows an unusual pathway, termed non-hydrolytic serinolysis, in which the side chain hydroxyl group of the serine supplies its oxygen atom to form the C-terminus of the beta chain, while the remainder of the serine residue undergoes an oxidative deamination to produce ammonia and the pyruvoyl group blocking the N-terminus of the alpha chain.

It catalyses the reaction S-adenosyl-L-methionine + H(+) = S-adenosyl 3-(methylsulfanyl)propylamine + CO2. It functions in the pathway amine and polyamine biosynthesis; S-adenosylmethioninamine biosynthesis; S-adenosylmethioninamine from S-adenosyl-L-methionine: step 1/1. Its function is as follows. Catalyzes the decarboxylation of S-adenosylmethionine to S-adenosylmethioninamine (dcAdoMet), the propylamine donor required for the synthesis of the polyamines spermine and spermidine from the diamine putrescine. The chain is S-adenosylmethionine decarboxylase proenzyme from Xylella fastidiosa (strain Temecula1 / ATCC 700964).